The chain runs to 369 residues: Peptidyl-prolyl cis-trans isomerase D (369 aa).

The PPIase cyclophilin-type domain occupies 8 to 173 (YFDLSIGGKP…ADVRIDACGI (166 aa)). TPR repeat units lie at residues 218-251 (VEAV…LQEY), 269-302 (VAVH…AADD), and 306-339 (AKAL…QPGD).

The protein belongs to the cyclophilin-type PPIase family. PPIase D subfamily.

The protein resides in the cytoplasm. The enzyme catalyses [protein]-peptidylproline (omega=180) = [protein]-peptidylproline (omega=0). Its function is as follows. PPIases accelerate the folding of proteins. It catalyzes the cis-trans isomerization of proline imidic peptide bonds in oligopeptides. The chain is Peptidyl-prolyl cis-trans isomerase D (CPR6) from Eremothecium gossypii (strain ATCC 10895 / CBS 109.51 / FGSC 9923 / NRRL Y-1056) (Yeast).